The chain runs to 163 residues: UPF0260 protein GOX1406 (163 aa).

Belongs to the UPF0260 family.

This chain is UPF0260 protein GOX1406, found in Gluconobacter oxydans (strain 621H) (Gluconobacter suboxydans).